Consider the following 892-residue polypeptide: DNA mismatch repair protein MutS (892 aa).

607-614 (GPNMSGKS) contributes to the ATP binding site. Residues 826-854 (ETKAETEEESQLSFFGGEQSSKKQDKPVL) form a disordered region. Residues 845-854 (SSKKQDKPVL) show a composition bias toward basic and acidic residues.

Belongs to the DNA mismatch repair MutS family.

This protein is involved in the repair of mismatches in DNA. It is possible that it carries out the mismatch recognition step. This protein has a weak ATPase activity. The protein is DNA mismatch repair protein MutS of Bacillus cereus (strain AH187).